The primary structure comprises 1068 residues: Carbamoyl phosphate synthase large chain (1068 aa).

Positions 1-403 (MPKRTDINTI…SLQKALRGLE (403 aa)) are carboxyphosphate synthetic domain. Residues arginine 129, arginine 169, glycine 175, glycine 176, glutamine 208, valine 210, glutamate 215, glycine 241, valine 242, histidine 243, glutamine 285, and glutamate 299 each contribute to the ATP site. Residues 133 to 328 (KEAMEKIGLS…IAKVAAKLAV (196 aa)) enclose the ATP-grasp 1 domain. Glutamine 285, glutamate 299, and asparagine 301 together coordinate Mg(2+). Mn(2+) is bound by residues glutamine 285, glutamate 299, and asparagine 301. Residues 404-548 (TGICGFNLMS…YSTYEEECES (145 aa)) form an oligomerization domain region. The segment at 549-930 (RPSDKKKIMI…AFLKAQLGAN (382 aa)) is carbamoyl phosphate synthetic domain. One can recognise an ATP-grasp 2 domain in the interval 673-864 (QQILHKLHLK…LAKIAARVMA (192 aa)). The ATP site is built by arginine 709, histidine 748, leucine 750, glutamate 755, glycine 780, isoleucine 781, histidine 782, serine 783, glutamine 823, and glutamate 835. 3 residues coordinate Mg(2+): glutamine 823, glutamate 835, and asparagine 837. 3 residues coordinate Mn(2+): glutamine 823, glutamate 835, and asparagine 837. Residues 931 to 1068 (ERIPKTGKVF…SLQDLHQRLL (138 aa)) enclose the MGS-like domain. The segment at 931–1068 (ERIPKTGKVF…SLQDLHQRLL (138 aa)) is allosteric domain.

It belongs to the CarB family. Composed of two chains; the small (or glutamine) chain promotes the hydrolysis of glutamine to ammonia, which is used by the large (or ammonia) chain to synthesize carbamoyl phosphate. Tetramer of heterodimers (alpha,beta)4. The cofactor is Mg(2+). Requires Mn(2+) as cofactor.

It catalyses the reaction hydrogencarbonate + L-glutamine + 2 ATP + H2O = carbamoyl phosphate + L-glutamate + 2 ADP + phosphate + 2 H(+). The catalysed reaction is hydrogencarbonate + NH4(+) + 2 ATP = carbamoyl phosphate + 2 ADP + phosphate + 2 H(+). The protein operates within amino-acid biosynthesis; L-arginine biosynthesis; carbamoyl phosphate from bicarbonate: step 1/1. It participates in pyrimidine metabolism; UMP biosynthesis via de novo pathway; (S)-dihydroorotate from bicarbonate: step 1/3. In terms of biological role, large subunit of the glutamine-dependent carbamoyl phosphate synthetase (CPSase). CPSase catalyzes the formation of carbamoyl phosphate from the ammonia moiety of glutamine, carbonate, and phosphate donated by ATP, constituting the first step of 2 biosynthetic pathways, one leading to arginine and/or urea and the other to pyrimidine nucleotides. The large subunit (synthetase) binds the substrates ammonia (free or transferred from glutamine from the small subunit), hydrogencarbonate and ATP and carries out an ATP-coupled ligase reaction, activating hydrogencarbonate by forming carboxy phosphate which reacts with ammonia to form carbamoyl phosphate. The sequence is that of Carbamoyl phosphate synthase large chain from Pasteurella multocida (strain Pm70).